The chain runs to 112 residues: Putative movement protein (112 aa).

The helical transmembrane segment at 27-47 (IGIIMLCIVGIVVLWVLIILC) threads the bilayer. Residues 77-112 (TGTPFEETGPHRERRWAERRTEATNQNNNDNVNRFS) are disordered. Residues 84–98 (TGPHRERRWAERRTE) are compositionally biased toward basic and acidic residues. Over residues 101-112 (NQNNNDNVNRFS) the composition is skewed to polar residues.

This sequence belongs to the nanovirus movement protein family.

The protein resides in the host cell membrane. Its function is as follows. May transport viral genome to neighboring plant cells directly through plasmosdesmata, without any budding. The movement protein allows efficient cell to cell propagation, by bypassing the host cell wall barrier. The polypeptide is Putative movement protein (DNA-M) (Subterranean clover stunt virus (strain F) (SCSV)).